Reading from the N-terminus, the 86-residue chain is uncharacterized protein (86 aa).

This is an uncharacterized protein from Ovis aries (Sheep).